The following is a 130-amino-acid chain: Small ribosomal subunit protein uS8 (130 aa).

The protein belongs to the universal ribosomal protein uS8 family. As to quaternary structure, part of the 30S ribosomal subunit. Contacts proteins S5 and S12.

One of the primary rRNA binding proteins, it binds directly to 16S rRNA central domain where it helps coordinate assembly of the platform of the 30S subunit. This is Small ribosomal subunit protein uS8 from Saccharophagus degradans (strain 2-40 / ATCC 43961 / DSM 17024).